Consider the following 400-residue polypeptide: Arrestin, lateral eye (400 aa).

It belongs to the arrestin family. Post-translationally, phosphorylated.

Plays an important role in the photoreceptor transduction. This chain is Arrestin, lateral eye, found in Limulus polyphemus (Atlantic horseshoe crab).